Consider the following 171-residue polypeptide: Peptide deformylase (171 aa).

2 residues coordinate Fe cation: Cys-94 and His-136. Residue Glu-137 is part of the active site. His-140 contributes to the Fe cation binding site.

The protein belongs to the polypeptide deformylase family. It depends on Fe(2+) as a cofactor.

It catalyses the reaction N-terminal N-formyl-L-methionyl-[peptide] + H2O = N-terminal L-methionyl-[peptide] + formate. In terms of biological role, removes the formyl group from the N-terminal Met of newly synthesized proteins. Requires at least a dipeptide for an efficient rate of reaction. N-terminal L-methionine is a prerequisite for activity but the enzyme has broad specificity at other positions. The protein is Peptide deformylase of Afipia carboxidovorans (strain ATCC 49405 / DSM 1227 / KCTC 32145 / OM5) (Oligotropha carboxidovorans).